Consider the following 79-residue polypeptide: Sec-independent protein translocase protein TatA (79 aa).

The helical transmembrane segment at 1–21 threads the bilayer; the sequence is MGSFSIWHWLIVLAIVVLVFG. Residues 43 to 79 form a disordered region; it reads VKDGSTSTDTPAAAPGQVAGQTAADKTTIDVEAKQKG. Residues 69–79 show a composition bias toward basic and acidic residues; sequence TTIDVEAKQKG.

This sequence belongs to the TatA/E family. In terms of assembly, the Tat system comprises two distinct complexes: a TatABC complex, containing multiple copies of TatA, TatB and TatC subunits, and a separate TatA complex, containing only TatA subunits. Substrates initially bind to the TatABC complex, which probably triggers association of the separate TatA complex to form the active translocon.

The protein localises to the cell inner membrane. In terms of biological role, part of the twin-arginine translocation (Tat) system that transports large folded proteins containing a characteristic twin-arginine motif in their signal peptide across membranes. TatA could form the protein-conducting channel of the Tat system. The polypeptide is Sec-independent protein translocase protein TatA (Delftia acidovorans (strain DSM 14801 / SPH-1)).